We begin with the raw amino-acid sequence, 2250 residues long: RNA1 polyprotein (2250 aa).

Residues 346-371 (SPTVTPSSTPSTSRSSSPEPRVSSPS) are compositionally biased toward low complexity. The segment at 346 to 372 (SPTVTPSSTPSTSRSSSPEPRVSSPSG) is disordered. Residues 849-1020 (LRDAHNALSR…PHFHEFNLLA (172 aa)) enclose the SF3 helicase domain. The chain crosses the membrane as a helical span at residues 1225–1245 (VALCAVLLVGYLIIKFAIFLF). Serine 1299 is subject to O-(5'-phospho-RNA)-serine. The 214-residue stretch at 1319-1532 (GPEEEPSQSL…YAQIVTLDDF (214 aa)) folds into the Peptidase C3 domain. Catalysis depends on for picornain 3C-like protease activity residues histidine 1362, aspartate 1400, and cysteine 1495. In terms of domain architecture, RdRp catalytic spans 1814-1956 (TNWFNGDYSR…SVNDVITEKF (143 aa)).

Belongs to the comoviridae genome polyprotein B family. In terms of processing, specific enzymatic cleavages by picornain 3C-like protease in vivo yield mature proteins. Picornain 3C-like protease is autocatalytically processed. Post-translationally, viral genome-linked protein (VPg) is uridylylated by the polymerase and is covalently linked to the 5'-end of genomic RNA. This uridylylated form acts as a nucleotide-peptide primer for the polymerase.

The protein resides in the host membrane. The enzyme catalyses RNA(n) + a ribonucleoside 5'-triphosphate = RNA(n+1) + diphosphate. Its function is as follows. Picornain 3C-like protease is a thiol protease that probably cleaves the B and M polyproteins. Functionally, viral genome-linked protein (VPg) plays a role in RNA replication. This Balsamorhiza sagittata (Apple) protein is RNA1 polyprotein.